The chain runs to 146 residues: UPF0735 ACT domain-containing protein Cphy_3604 (146 aa).

The region spanning 70–145 is the ACT domain; the sequence is TFMLQMDDIP…GIHYLKILGR (76 aa).

It belongs to the UPF0735 family.

The protein is UPF0735 ACT domain-containing protein Cphy_3604 of Lachnoclostridium phytofermentans (strain ATCC 700394 / DSM 18823 / ISDg) (Clostridium phytofermentans).